A 435-amino-acid polypeptide reads, in one-letter code: MSIRVLTGITTSGTPHLGNYVGAIRPAIRAAGAPGTESFYFLADLHSLIKVQDPERTQRSTLEIAATWLACGLDPEKVWLYRQSDVPEITELMWLLTCVAGKGILNRAHAYKAVVDKNRSHGDDDDAGITAGLFMYPVLMAADILLFNAHQVPVGRDQIQHIEMARDFAQRFNHIYGGEYLVLPEAAIDEQVATLPGLDGRKMSKSYGNTMPLFCTREELKKYVFSIVTDSRAPGEPKEAVGSAVFQLYQAFAGVEECSMFAQALVEGLGWGEAKVRLFERIDAEVAPLRERYEDFMRRPADIEAMLRDSAGRLRERDAIPLLARLREAVGLRSLSLCMVSAVPVPQEKVALPVLKQYREQDGRFYFKLIDGQGAVLVQSRGFASPRDAGQWIALFKQVVSAEALVSPMLEPVADPVVVLAALRRLREAGLDLYT.

ATP contacts are provided by residues 10–12 (TTS) and 18–19 (GN). A 'HIGH' region motif is present at residues 11 to 19 (TSGTPHLGN). Asp-143 serves as a coordination point for L-tryptophan. ATP-binding positions include 155 to 157 (GRD), Leu-195, and 202 to 206 (KMSKS). A 'KMSKS' region motif is present at residues 202–206 (KMSKS).

This sequence belongs to the class-I aminoacyl-tRNA synthetase family. As to quaternary structure, homodimer.

It is found in the cytoplasm. The catalysed reaction is tRNA(Trp) + L-tryptophan + ATP = L-tryptophyl-tRNA(Trp) + AMP + diphosphate + H(+). In terms of biological role, catalyzes the attachment of tryptophan to tRNA(Trp). This Xylella fastidiosa (strain Temecula1 / ATCC 700964) protein is Tryptophan--tRNA ligase.